Consider the following 126-residue polypeptide: Protein K7 (126 aa).

Residues 24–44 form a helical membrane-spanning segment; it reads LPLHLWILCSLLAFLPLLVFI.

As to quaternary structure, interacts with host CAMLG; this interaction allows efficient apoptosis inhibition. Additionally, interacts with vGPCR/ORF74 and induces its proteasomeal degradation.

The protein resides in the host membrane. Its subcellular location is the host mitochondrion. In terms of biological role, plays a role in the inhibition of host apoptosis to allow completion of the viral lytic replication and may thus favor the maintenance of persistent infection in infected host. This is Protein K7 (K7) from Homo sapiens (Human).